The primary structure comprises 308 residues: Carbamate kinase (308 aa).

This sequence belongs to the carbamate kinase family.

The protein resides in the cytoplasm. The catalysed reaction is hydrogencarbonate + NH4(+) + ATP = carbamoyl phosphate + ADP + H2O + H(+). In Synechocystis sp. (strain ATCC 27184 / PCC 6803 / Kazusa), this protein is Carbamate kinase.